The primary structure comprises 502 residues: Glutamate decarboxylase 1 (502 aa).

Position 8 is a phosphoserine (Ser-8). Position 277 is an N6-(pyridoxal phosphate)lysine (Lys-277). A calmodulin-binding region spans residues 469–502; sequence LMVTVKKSDIDKQRDIITGWKKFVADRKKTSGIC.

This sequence belongs to the group II decarboxylase family. In terms of assembly, homohexamer. Interacts with calmodulin with a 1:3 stoichiometry. The cofactor is pyridoxal 5'-phosphate. Expressed in roots. Detected at low levels in shoots of young seedlings. Not detected in the root tips or in the central vascular bundle in the elongating region of mature roots.

It carries out the reaction L-glutamate + H(+) = 4-aminobutanoate + CO2. Up-regulated by calmodulin binding at physiological pH. In terms of biological role, catalyzes the conversion of glutamate to 4-aminobutanoate (GABA). The calmodulin-binding is calcium-dependent and it is proposed to directly or indirectly form a calcium regulated control of GABA biosynthesis. This Arabidopsis thaliana (Mouse-ear cress) protein is Glutamate decarboxylase 1 (GAD1).